A 229-amino-acid chain; its full sequence is Ribonuclease 3 (229 aa).

Residues 8–130 (LTELEKIVGY…IIGAIYLDSD (123 aa)) form the RNase III domain. A Mg(2+)-binding site is contributed by Glu-43. Asp-47 is an active-site residue. The Mg(2+) site is built by Asp-116 and Glu-119. The active site involves Glu-119. One can recognise a DRBM domain in the interval 157 to 227 (DPKTRLQELL…ATAALEHLQE (71 aa)). A disordered region spans residues 201-229 (SPFKGTGTSRRKAEQAAATAALEHLQESA).

This sequence belongs to the ribonuclease III family. Homodimer. The cofactor is Mg(2+).

Its subcellular location is the cytoplasm. It catalyses the reaction Endonucleolytic cleavage to 5'-phosphomonoester.. Functionally, digests double-stranded RNA. Involved in the processing of primary rRNA transcript to yield the immediate precursors to the large and small rRNAs (23S and 16S). Processes some mRNAs, and tRNAs when they are encoded in the rRNA operon. Processes pre-crRNA and tracrRNA of type II CRISPR loci if present in the organism. In Idiomarina loihiensis (strain ATCC BAA-735 / DSM 15497 / L2-TR), this protein is Ribonuclease 3.